Here is a 189-residue protein sequence, read N- to C-terminus: Thymidine kinase (189 aa).

Residues 9–16 (GTMNSGKT) and 85–88 (DESQ) contribute to the ATP site. Glutamate 86 functions as the Proton acceptor in the catalytic mechanism. 4 residues coordinate Zn(2+): cysteine 143, cysteine 146, cysteine 180, and histidine 183.

It belongs to the thymidine kinase family. As to quaternary structure, homotetramer.

It is found in the cytoplasm. It carries out the reaction thymidine + ATP = dTMP + ADP + H(+). The chain is Thymidine kinase from Streptococcus pyogenes serotype M18 (strain MGAS8232).